Consider the following 60-residue polypeptide: Large ribosomal subunit protein uL30 (60 aa).

This sequence belongs to the universal ribosomal protein uL30 family. In terms of assembly, part of the 50S ribosomal subunit.

This chain is Large ribosomal subunit protein uL30, found in Pediococcus pentosaceus (strain ATCC 25745 / CCUG 21536 / LMG 10740 / 183-1w).